Here is a 64-residue protein sequence, read N- to C-terminus: Large ribosomal subunit protein bL35 (64 aa).

Residues 1–44 (MSKIKSHSGAAKRFKRTANGFKHKQSHTSHILTKKSTKRKRHLR) show a composition bias toward basic residues. Residues 1–48 (MSKIKSHSGAAKRFKRTANGFKHKQSHTSHILTKKSTKRKRHLRSMNQ) form a disordered region.

This sequence belongs to the bacterial ribosomal protein bL35 family.

This is Large ribosomal subunit protein bL35 from Marinomonas sp. (strain MWYL1).